The chain runs to 186 residues: Large ribosomal subunit protein uL15 (186 aa).

The segment at 1–48 (MDLSSLRPAKGAVKARKRVGRGPGSGNGTTAGKGNKGQQSRSGYQRPV) is disordered. The segment covering 21-35 (RGPGSGNGTTAGKGN) has biased composition (gly residues).

Belongs to the universal ribosomal protein uL15 family. Part of the 50S ribosomal subunit.

In terms of biological role, binds to the 23S rRNA. This chain is Large ribosomal subunit protein uL15, found in Chlorobaculum tepidum (strain ATCC 49652 / DSM 12025 / NBRC 103806 / TLS) (Chlorobium tepidum).